We begin with the raw amino-acid sequence, 216 residues long: Probable GTP-binding protein EngB (216 aa).

An EngB-type G domain is found at 24-205 (ATPEIAFVGR…WARLAALAAE (182 aa)). GTP contacts are provided by residues 32–39 (GRSNVGKS), 59–63 (GRTRA), 86–89 (DLPG), 153–156 (TKTD), and 184–186 (FSA). Positions 39 and 61 each coordinate Mg(2+).

This sequence belongs to the TRAFAC class TrmE-Era-EngA-EngB-Septin-like GTPase superfamily. EngB GTPase family. Mg(2+) is required as a cofactor.

Its function is as follows. Necessary for normal cell division and for the maintenance of normal septation. This is Probable GTP-binding protein EngB from Anaeromyxobacter dehalogenans (strain 2CP-C).